We begin with the raw amino-acid sequence, 217 residues long: Ras-related protein Rab-19 (217 aa).

GTP is bound by residues Ser-26, Val-28, Gly-29, Lys-30, Thr-31, Cys-32, Tyr-42, Ser-43, Glu-44, Ser-45, and Thr-49. Thr-31 provides a ligand contact to Mg(2+). The short motif at 39 to 54 (SGVYSESQQNTIGVDF) is the Switch 1 element. Residues Thr-49 and Asp-72 each coordinate Mg(2+). A Switch 2 motif is present at residues 74–89 (AGQERFRTITQSYYRS). Positions 75, 130, 131, 133, 161, 162, and 163 each coordinate GTP. Residues Cys-215 and Cys-217 are each lipidated (S-geranylgeranyl cysteine). Position 217 is a cysteine methyl ester (Cys-217).

The protein belongs to the small GTPase superfamily. Rab family. The cofactor is Mg(2+). As to expression, expressed in a tissue-specific manner. Detected at high levels in intestine, lung and spleen, and at a lower level in kidney.

The protein resides in the cell membrane. It catalyses the reaction GTP + H2O = GDP + phosphate + H(+). Its activity is regulated as follows. Regulated by guanine nucleotide exchange factors (GEFs) which promote the exchange of bound GDP for free GTP. Regulated by GTPase activating proteins (GAPs) which increase the GTP hydrolysis activity. Inhibited by GDP dissociation inhibitors (GDIs). The small GTPases Rab are key regulators of intracellular membrane trafficking, from the formation of transport vesicles to their fusion with membranes. Rabs cycle between an inactive GDP-bound form and an active GTP-bound form that is able to recruit to membranes different set of downstream effectors directly responsible for vesicle formation, movement, tethering and fusion. This chain is Ras-related protein Rab-19, found in Mus musculus (Mouse).